The primary structure comprises 529 residues: NAD(P)H-quinone oxidoreductase chain 4 1 (529 aa).

13 helical membrane passes run 4 to 24, 36 to 56, 91 to 111, 115 to 135, 137 to 157, 169 to 189, 209 to 229, 243 to 263, 277 to 297, 314 to 334, 335 to 355, 387 to 407, and 417 to 437; these read FPWL…IPFI, WYAL…FTNF, LILL…PVTL, LFYF…AVQD, LVFF…LAIW, FILY…AMAF, GFQL…LPIV, TAPV…YALI, FAPV…LTSY, IGFV…GAVL, QMVS…ATYD, LALP…GFAT, and VIVV…LLSM.

The protein belongs to the complex I subunit 4 family.

It is found in the cellular thylakoid membrane. It carries out the reaction a plastoquinone + NADH + (n+1) H(+)(in) = a plastoquinol + NAD(+) + n H(+)(out). The enzyme catalyses a plastoquinone + NADPH + (n+1) H(+)(in) = a plastoquinol + NADP(+) + n H(+)(out). Its function is as follows. NDH-1 shuttles electrons from NAD(P)H, via FMN and iron-sulfur (Fe-S) centers, to quinones in the respiratory chain. The immediate electron acceptor for the enzyme in this species is believed to be plastoquinone. Couples the redox reaction to proton translocation (for every two electrons transferred, four hydrogen ions are translocated across the cytoplasmic membrane), and thus conserves the redox energy in a proton gradient. This is NAD(P)H-quinone oxidoreductase chain 4 1 from Thermosynechococcus vestitus (strain NIES-2133 / IAM M-273 / BP-1).